Reading from the N-terminus, the 206-residue chain is Peptidyl-tRNA hydrolase (206 aa).

Tyr-19 serves as a coordination point for tRNA. Catalysis depends on His-24, which acts as the Proton acceptor. TRNA is bound by residues Tyr-70, Asn-72, and Asn-118.

It belongs to the PTH family. In terms of assembly, monomer.

It localises to the cytoplasm. The enzyme catalyses an N-acyl-L-alpha-aminoacyl-tRNA + H2O = an N-acyl-L-amino acid + a tRNA + H(+). Its function is as follows. Hydrolyzes ribosome-free peptidyl-tRNAs (with 1 or more amino acids incorporated), which drop off the ribosome during protein synthesis, or as a result of ribosome stalling. Catalyzes the release of premature peptidyl moieties from peptidyl-tRNA molecules trapped in stalled 50S ribosomal subunits, and thus maintains levels of free tRNAs and 50S ribosomes. This chain is Peptidyl-tRNA hydrolase, found in Prochlorococcus marinus (strain MIT 9303).